The primary structure comprises 249 residues: Phosphonates import ATP-binding protein PhnC (249 aa).

The 245-residue stretch at 2–246 (IEFKKVEKVW…KLNESKLEEI (245 aa)) folds into the ABC transporter domain. 35–42 (GLSGAGKT) contributes to the ATP binding site.

It belongs to the ABC transporter superfamily. Phosphonates importer (TC 3.A.1.9.1) family. In terms of assembly, the complex is composed of two ATP-binding proteins (PhnC), two transmembrane proteins (PhnE) and a solute-binding protein (PhnD).

It is found in the cell membrane. The catalysed reaction is phosphonate(out) + ATP + H2O = phosphonate(in) + ADP + phosphate + H(+). Its function is as follows. Part of the ABC transporter complex PhnCDE involved in phosphonates import. Responsible for energy coupling to the transport system. This is Phosphonates import ATP-binding protein PhnC from Mesoplasma florum (strain ATCC 33453 / NBRC 100688 / NCTC 11704 / L1) (Acholeplasma florum).